The following is an 889-amino-acid chain: TATA box-binding protein-associated factor RNA polymerase I subunit B (889 aa).

The segment at 1-33 adopts an RRN7-type zinc-finger fold; sequence MAPETNEKCKACGGFNFSMIDGFKYCDRCGTLL. Zn(2+) contacts are provided by Cys9, Cys12, Cys26, and Cys29. The B-reader stretch occupies residues 35 to 101; it reads NFEELEAEEG…DFFSRQALKN (67 aa). The interval 102 to 113 is B-linker; that stretch reads DELAFPHESTPD. Positions 114–351 are N-terminal cyclin fold; sequence YLYRLGLRLA…SAKEQETKEA (238 aa). The disordered stretch occupies residues 229–253; sequence NLDLDSEEDEEEEENPNLNKSMENL. Residues 230-243 are compositionally biased toward acidic residues; that stretch reads LDLDSEEDEEEEEN. The segment at 352 to 510 is C-terminal cyclin fold; the sequence is MTKVDYAEPY…LLVFRLTFDI (159 aa).

It belongs to the RRN7/TAF1B family.

The protein resides in the nucleus. Its subcellular location is the nucleolus. In terms of biological role, component of RNA polymerase I core factor complex that acts as a GTF2B/TFIIB-like factor and plays a key role in multiple steps during transcription initiation such as pre-initiation complex (PIC) assembly and postpolymerase recruitment events in polymerase I (Pol I) transcription. Binds rDNA promoters and plays a role in Pol I recruitment. The chain is TATA box-binding protein-associated factor RNA polymerase I subunit B from Caenorhabditis briggsae.